The chain runs to 512 residues: Methionine--tRNA ligase (512 aa).

Residues 11 to 21 carry the 'HIGH' region motif; sequence YYASGKPHIGH. The Zn(2+) site is built by Cys126, Cys129, Cys143, and His147. The 'KMSKS' region signature appears at 301-305; that stretch reads KMSKS. ATP is bound at residue Lys304.

Belongs to the class-I aminoacyl-tRNA synthetase family. MetG type 2A subfamily. Monomer. Zn(2+) serves as cofactor.

Its subcellular location is the cytoplasm. The enzyme catalyses tRNA(Met) + L-methionine + ATP = L-methionyl-tRNA(Met) + AMP + diphosphate. In terms of biological role, is required not only for elongation of protein synthesis but also for the initiation of all mRNA translation through initiator tRNA(fMet) aminoacylation. This is Methionine--tRNA ligase (metG) from Mycoplasma genitalium (strain ATCC 33530 / DSM 19775 / NCTC 10195 / G37) (Mycoplasmoides genitalium).